The chain runs to 891 residues: Valine--tRNA ligase (891 aa).

A 'HIGH' region motif is present at residues 43-53 (PFTSGTLHLGH). The 'KMSKS' region motif lies at 536-540 (KMSKS). K539 lines the ATP pocket.

The protein belongs to the class-I aminoacyl-tRNA synthetase family. ValS type 2 subfamily.

It localises to the cytoplasm. The catalysed reaction is tRNA(Val) + L-valine + ATP = L-valyl-tRNA(Val) + AMP + diphosphate. In terms of biological role, catalyzes the attachment of valine to tRNA(Val). As ValRS can inadvertently accommodate and process structurally similar amino acids such as threonine, to avoid such errors, it has a 'posttransfer' editing activity that hydrolyzes mischarged Thr-tRNA(Val) in a tRNA-dependent manner. This is Valine--tRNA ligase from Pyrococcus furiosus (strain ATCC 43587 / DSM 3638 / JCM 8422 / Vc1).